A 353-amino-acid chain; its full sequence is Phospho-N-acetylmuramoyl-pentapeptide-transferase (353 aa).

Transmembrane regions (helical) follow at residues 24-44, 66-86, 88-108, 129-149, 160-180, 192-212, 229-249, 256-276, 281-301, and 330-350; these read LGFF…ILWA, TPTM…VLCA, LSNL…FVGF, FGML…KGLD, PLFE…FLST, GLAS…VYVA, VGEL…FLWY, VFMG…NAIV, ILLV…ILQV, and KVIV…LLSL.

This sequence belongs to the glycosyltransferase 4 family. MraY subfamily. It depends on Mg(2+) as a cofactor.

The protein resides in the cell inner membrane. It carries out the reaction UDP-N-acetyl-alpha-D-muramoyl-L-alanyl-gamma-D-glutamyl-meso-2,6-diaminopimeloyl-D-alanyl-D-alanine + di-trans,octa-cis-undecaprenyl phosphate = di-trans,octa-cis-undecaprenyl diphospho-N-acetyl-alpha-D-muramoyl-L-alanyl-D-glutamyl-meso-2,6-diaminopimeloyl-D-alanyl-D-alanine + UMP. The protein operates within cell wall biogenesis; peptidoglycan biosynthesis. Catalyzes the initial step of the lipid cycle reactions in the biosynthesis of the cell wall peptidoglycan: transfers peptidoglycan precursor phospho-MurNAc-pentapeptide from UDP-MurNAc-pentapeptide onto the lipid carrier undecaprenyl phosphate, yielding undecaprenyl-pyrophosphoryl-MurNAc-pentapeptide, known as lipid I. This is Phospho-N-acetylmuramoyl-pentapeptide-transferase from Helicobacter pylori (strain J99 / ATCC 700824) (Campylobacter pylori J99).